The following is a 390-amino-acid chain: Methylthioribose-1-phosphate isomerase (390 aa).

Residues 53–55 (RGA), Arg90, and Gln207 each bind substrate. Asp248 acts as the Proton donor in catalysis. 258 to 259 (NK) serves as a coordination point for substrate.

It belongs to the EIF-2B alpha/beta/delta subunits family. MtnA subfamily.

The catalysed reaction is 5-(methylsulfanyl)-alpha-D-ribose 1-phosphate = 5-(methylsulfanyl)-D-ribulose 1-phosphate. It carries out the reaction 5-deoxy-alpha-D-ribose 1-phosphate = 5-deoxy-D-ribulose 1-phosphate. It functions in the pathway amino-acid biosynthesis; L-methionine biosynthesis via salvage pathway; L-methionine from S-methyl-5-thio-alpha-D-ribose 1-phosphate: step 1/6. Catalyzes the interconversion of methylthioribose-1-phosphate (MTR-1-P) into methylthioribulose-1-phosphate (MTRu-1-P). Also catalyzes the interconversion of 5-deoxyribose 1-phosphate and 5-deoxyribulose 1-phosphate. Part of a bifunctional DHAP-shunt salvage pathway for SAM by-products. The polypeptide is Methylthioribose-1-phosphate isomerase (Rhodospirillum rubrum (strain ATCC 11170 / ATH 1.1.1 / DSM 467 / LMG 4362 / NCIMB 8255 / S1)).